The primary structure comprises 92 residues: PqqA binding protein (92 aa).

This sequence belongs to the PqqD family. Monomer. Interacts with PqqE.

It participates in cofactor biosynthesis; pyrroloquinoline quinone biosynthesis. Functionally, functions as a PqqA binding protein and presents PqqA to PqqE, in the pyrroloquinoline quinone (PQQ) biosynthetic pathway. The sequence is that of PqqA binding protein from Xanthomonas campestris pv. campestris (strain 8004).